The primary structure comprises 246 residues: uncharacterized protein (246 aa).

Positions 204 to 243 form a coiled coil; it reads TTKLKKLEKEIHELPYMLINGKITYEEYKKRIREIEKEIG.

This is an uncharacterized protein from Aquifex aeolicus (strain VF5).